Consider the following 428-residue polypeptide: MASSLLEEEAHYGSSPLAMLTAACSKFGGSSPLRDSTTLGKGGTKKPYADLSAPKTMGDAYPAPFSSTNGLLSPAGSPPAPASGYANDYPPFPHSFPGPTGAQDPGLLVPKGHSSSDCLPSVYTSLDMTHPYGSWYKAGIHAGISPGPGNTPTPWWDMHPGGNWLGGGQGQGDGLQGTLSTGPAQPPLNPQLPTYPSDFAPLNPAPYPAPHLLQPGPQHVLPQDVYKPKAVGNSGQLEGSGAAKPPRGAGTGGSGGYAGSGAGRSTCDCPNCQELERLGAAAAGLRKKPIHSCHIPGCGKVYGKASHLKAHLRWHTGERPFVCNWLFCGKRFTRSDELERHVRTHTREKKFTCLLCSKRFTRSDHLSKHQRTHGEPGPGPPPSGPKELGEGRSVGEEEANQPPRSSTSPAPPEKAHGGSPEQSNLLEI.

The tract at residues 30–84 is disordered; the sequence is SSPLRDSTTLGKGGTKKPYADLSAPKTMGDAYPAPFSSTNGLLSPAGSPPAPASG. Residues Lys-41 and Lys-45 each carry the N6-propionyllysine modification. Lys-55 is covalently cross-linked (Glycyl lysine isopeptide (Lys-Gly) (interchain with G-Cter in ubiquitin)). The 9aaTAD motif lies at 153–161; the sequence is TPWWDMHPG. Residue Lys-227 forms a Glycyl lysine isopeptide (Lys-Gly) (interchain with G-Cter in ubiquitin) linkage. Residues 229-257 are disordered; it reads KAVGNSGQLEGSGAAKPPRGAGTGGSGGY. C2H2-type zinc fingers lie at residues 291 to 315, 321 to 345, and 351 to 373; these read HSCHIPGCGKVYGKASHLKAHLRWH, FVCNWLFCGKRFTRSDELERHVRTH, and FTCLLCSKRFTRSDHLSKHQRTH. Lys-358 and Lys-368 each carry N6-propionyllysine. The disordered stretch occupies residues 364–428; sequence DHLSKHQRTH…SPEQSNLLEI (65 aa).

It belongs to the Sp1 C2H2-type zinc-finger protein family. In terms of assembly, interacts with RIOX1; the interaction is direct and inhibits transcription activator activity. In terms of processing, propionylated. Depropionylation at Lys-368 by SIRT7 activates transcription factor activity and positively regulates bone formation by osteoblasts. Ubiquitination at leads to proteasomal degradation. SP7 is a short-live protein with an endogenous half-life of approximately 12 hours. Osteoblast/chondrocyte specific.

The protein resides in the nucleus. Its function is as follows. Transcriptional activator essential for osteoblast differentiation. Binds to SP1 and EKLF consensus sequences and to other G/C-rich sequences. The protein is Transcription factor Sp7 (Sp7) of Mus musculus (Mouse).